We begin with the raw amino-acid sequence, 977 residues long: Serine/threonine-protein kinase/endoribonuclease IRE1 (977 aa).

A signal peptide spans 1-20 (MPARWLLLLLALLLPPPGPG). Over 21–445 (SFGRTSTVTL…EAPVDSMLKD (425 aa)) the chain is Lumenal. N178 carries an N-linked (GlcNAc...) asparagine glycan. A helical transmembrane segment spans residues 446–466 (MATIILSTFLLVGWVAFIITY). Residues 467–977 (PLSVHQQRQL…PQPPVIPYAL (511 aa)) lie on the Cytoplasmic side of the membrane. A disordered region spans residues 498-559 (FHPHGDLTQD…PSLEQDDEDE (62 aa)). Over residues 513 to 551 (SSGPFSESSGTSSPSPSPRASNHSLHPSSSASRAGTSPS) the composition is skewed to low complexity. The region spanning 571–832 (FCPKDVLGHG…AKHVLKHPFF (262 aa)) is the Protein kinase domain. ATP contacts are provided by residues 577 to 585 (LGHGAEGTI), K599, and 643 to 645 (ELC). The active-site Proton acceptor; for protein kinase activity is the D688. ATP is bound by residues 690-693 (KPHN) and D711. Phosphoserine occurs at positions 724 and 729. Residues 835 to 963 (LEKQLQFFQD…ERLFQTYYWH (129 aa)) form the KEN domain. Positions 906–907 (NK) are interacts with hydroxy-aryl-aldehyde inhibitors.

It belongs to the protein kinase superfamily. Ser/Thr protein kinase family. In terms of assembly, monomer. Homodimer; disulfide-linked; homodimerization takes place in response to endoplasmic reticulum stress and promotes activation of the kinase and endoribonuclease activities. Dimer formation is driven by hydrophobic interactions within the N-terminal luminal domains and stabilized by disulfide bridges. Interacts (via the luminal region) with DNAJB9/ERdj4; interaction takes place in unstressed cells and promotes recruitment of HSPA5/BiP. Interacts (via the luminal region) with HSPA5/BiP; HSPA5/BiP is a negative regulator of the unfolded protein response (UPR) that prevents homodimerization of ERN1/IRE1 and subsequent activation of the protein. Interaction with HSPA5 also competitively inhibits ERN1 interaction with MANF. Interacts with PDIA6, a negative regulator of the UPR; the interaction is direct and disrupts homodimerization. Interacts with DAB2IP (via PH domain); the interaction occurs in a endoplasmic reticulum stress-induced dependent manner and is required for subsequent recruitment of TRAF2 to ERN1/IRE1. Interacts with TAOK3 and TRAF2. Interacts with RNF13. Interacts with LACC1. Interacts (when unphosphorylated) with DDRGK1; interaction is dependent on UFM1 and takes place in response to endoplasmic reticulum stress, regulating ERN1/IRE1-alpha stability. Interacts (via N-terminus) with P4HB/PDIA1; the interaction is enhanced by phosphorylation of P4HB by FAM20C in response to endoplasmic reticulum stress and results in attenuation of ERN1 activity. Interacts with TMBIM6; this interaction inhibits ERN1 activity. Interacts (via luminal domain) with MANF (via C-terminus); the interaction is decreased in the presence of increasing concentrations of Ca(2+). The cofactor is Mg(2+). Autophosphorylated following homodimerization. Autophosphorylation promotes activation of the endoribonuclease domain. In response to ER stress, phosphorylated at Ser-724, Ser-729 and possibly Ser-726; phosphorylation promotes oligomerization and endoribonuclease activity. Dephosphorylated at Ser-724, Ser-729 and possibly Ser-726 by RPAP2 to abort failed ER-stress adaptation and trigger apoptosis. Phosphorylated at Ser-724; in response to the ER stressor tunicamycin. Post-translationally, ADP-ribosylated by PARP16 upon ER stress, which increases both kinase and endonuclease activities. As to expression, expressed in liver (at protein level). Ubiquitously expressed. High levels in thymus, liver and lung. In the brain, preferentially expressed in cortical, hippocampal and olfactory neurons.

Its subcellular location is the endoplasmic reticulum membrane. It catalyses the reaction L-seryl-[protein] + ATP = O-phospho-L-seryl-[protein] + ADP + H(+). The catalysed reaction is L-threonyl-[protein] + ATP = O-phospho-L-threonyl-[protein] + ADP + H(+). Its activity is regulated as follows. The kinase domain is activated by trans-autophosphorylation following homodimerization. Kinase activity is required for activation of the endoribonuclease domain. Endoribonuclease activity is specifically inhibited by hydroxy-aryl-aldehydes (HAA) MKC9989, OICR464 and OICR573. Functionally, serine/threonine-protein kinase and endoribonuclease that acts as a key sensor for the endoplasmic reticulum unfolded protein response (UPR). In unstressed cells, the endoplasmic reticulum luminal domain is maintained in its inactive monomeric state by binding to the endoplasmic reticulum chaperone HSPA5/BiP. Accumulation of misfolded protein in the endoplasmic reticulum causes release of HSPA5/BiP, allowing the luminal domain to homodimerize, promoting autophosphorylation of the kinase domain and subsequent activation of the endoribonuclease activity. The endoribonuclease activity is specific for XBP1 mRNA and excises 26 nucleotides from XBP1 mRNA. The resulting spliced transcript of XBP1 encodes a transcriptional activator protein that up-regulates expression of UPR target genes. Acts as an upstream signal for ER stress-induced GORASP2-mediated unconventional (ER/Golgi-independent) trafficking of CFTR to cell membrane by modulating the expression and localization of SEC16A. In Mus musculus (Mouse), this protein is Serine/threonine-protein kinase/endoribonuclease IRE1.